Consider the following 108-residue polypeptide: Transcription factor AmrZ (108 aa).

Functions both as a transcriptional activator and a repressor of multiple genes encoding virulence factors as well as genes involved in environmental adaptation. Represses genes involved in iron homeostasis. Modulates intracellular levels of c-di-GMP which in turn regulates swimming motility and biofilm formation. The chain is Transcription factor AmrZ from Pseudomonas ogarae (strain DSM 112162 / CECT 30235 / F113).